The chain runs to 217 residues: Translation initiation factor 6 (217 aa).

This sequence belongs to the eIF-6 family.

Binds to the 50S ribosomal subunit and prevents its association with the 30S ribosomal subunit to form the 70S initiation complex. The polypeptide is Translation initiation factor 6 (Picrophilus torridus (strain ATCC 700027 / DSM 9790 / JCM 10055 / NBRC 100828 / KAW 2/3)).